Here is a 353-residue protein sequence, read N- to C-terminus: Photosystem II D2 protein (353 aa).

N-acetylthreonine is present on T2. Phosphothreonine is present on T2. A helical transmembrane segment spans residues 41–61 (CAYFALGGWFTGTTFVTSWYT). H118 is a chlorophyll a binding site. The helical transmembrane segment at 125–141 (GFMLRQFELARSVQLRP) threads the bilayer. Pheophytin a-binding residues include Q130 and N143. The chain crosses the membrane as a helical span at residues 153–166 (VFVSVFLIYPLGQS). H198 is a chlorophyll a binding site. A helical transmembrane segment spans residues 208 to 228 (AALLCAIHGATVENTLFEDGD). 2 residues coordinate a plastoquinone: H215 and F262. H215 contributes to the Fe cation binding site. H269 serves as a coordination point for Fe cation. The chain crosses the membrane as a helical span at residues 279–295 (GLWMSAIGVVGLALNLR).

It belongs to the reaction center PufL/M/PsbA/D family. PSII is composed of 1 copy each of membrane proteins PsbA, PsbB, PsbC, PsbD, PsbE, PsbF, PsbH, PsbI, PsbJ, PsbK, PsbL, PsbM, PsbT, PsbX, PsbY, PsbZ, Psb30/Ycf12, at least 3 peripheral proteins of the oxygen-evolving complex and a large number of cofactors. It forms dimeric complexes. The cofactor is The D1/D2 heterodimer binds P680, chlorophylls that are the primary electron donor of PSII, and subsequent electron acceptors. It shares a non-heme iron and each subunit binds pheophytin, quinone, additional chlorophylls, carotenoids and lipids. There is also a Cl(-1) ion associated with D1 and D2, which is required for oxygen evolution. The PSII complex binds additional chlorophylls, carotenoids and specific lipids..

The protein resides in the plastid. It is found in the chloroplast thylakoid membrane. The enzyme catalyses 2 a plastoquinone + 4 hnu + 2 H2O = 2 a plastoquinol + O2. Photosystem II (PSII) is a light-driven water:plastoquinone oxidoreductase that uses light energy to abstract electrons from H(2)O, generating O(2) and a proton gradient subsequently used for ATP formation. It consists of a core antenna complex that captures photons, and an electron transfer chain that converts photonic excitation into a charge separation. The D1/D2 (PsbA/PsbD) reaction center heterodimer binds P680, the primary electron donor of PSII as well as several subsequent electron acceptors. D2 is needed for assembly of a stable PSII complex. In Saccharum hybrid (Sugarcane), this protein is Photosystem II D2 protein.